Consider the following 269-residue polypeptide: Tryptophan synthase alpha chain (269 aa).

Catalysis depends on proton acceptor residues Glu49 and Asp60.

It belongs to the TrpA family. As to quaternary structure, tetramer of two alpha and two beta chains.

It carries out the reaction (1S,2R)-1-C-(indol-3-yl)glycerol 3-phosphate + L-serine = D-glyceraldehyde 3-phosphate + L-tryptophan + H2O. The protein operates within amino-acid biosynthesis; L-tryptophan biosynthesis; L-tryptophan from chorismate: step 5/5. The alpha subunit is responsible for the aldol cleavage of indoleglycerol phosphate to indole and glyceraldehyde 3-phosphate. The protein is Tryptophan synthase alpha chain of Delftia acidovorans (strain DSM 14801 / SPH-1).